The following is a 298-amino-acid chain: Probable protein phosphatase 2C 26 (298 aa).

The region spanning Ser-48 to Val-295 is the PPM-type phosphatase domain. Residues Asp-82, Gly-83, Asp-213, and Asp-286 each contribute to the Mn(2+) site.

This sequence belongs to the PP2C family. Mg(2+) is required as a cofactor. The cofactor is Mn(2+).

The catalysed reaction is O-phospho-L-seryl-[protein] + H2O = L-seryl-[protein] + phosphate. It carries out the reaction O-phospho-L-threonyl-[protein] + H2O = L-threonyl-[protein] + phosphate. The sequence is that of Probable protein phosphatase 2C 26 from Arabidopsis thaliana (Mouse-ear cress).